A 126-amino-acid polypeptide reads, in one-letter code: Protein translocase subunit SecE (126 aa).

Helical transmembrane passes span 18-38 (LKWVATFVLLVAAVVGNYLYG), 40-60 (LSVVARAAGVIVLIAAALGVA), and 97-117 (IVLAVSIVMALALWGIDGIMV).

Belongs to the SecE/SEC61-gamma family. As to quaternary structure, component of the Sec protein translocase complex. Heterotrimer consisting of SecY, SecE and SecG subunits. The heterotrimers can form oligomers, although 1 heterotrimer is thought to be able to translocate proteins. Interacts with the ribosome. Interacts with SecDF, and other proteins may be involved. Interacts with SecA.

The protein resides in the cell inner membrane. Functionally, essential subunit of the Sec protein translocation channel SecYEG. Clamps together the 2 halves of SecY. May contact the channel plug during translocation. This Vibrio cholerae serotype O1 (strain ATCC 39315 / El Tor Inaba N16961) protein is Protein translocase subunit SecE.